We begin with the raw amino-acid sequence, 223 residues long: Pre-mRNA-splicing factor SPF27 (223 aa).

Residues 139-223 (NENLLHMIDC…GENKENIEDY (85 aa)) are a coiled coil.

Belongs to the SPF27 family. As to quaternary structure, component of the pre-catalytic and catalytic spliceosome complexes. Component of the postcatalytic spliceosome P complex.

The protein resides in the nucleus. In terms of biological role, required for pre-mRNA splicing as component of the activated spliceosome. May have a scaffolding role in the spliceosome assembly as it contacts all other components of the core complex. The protein is Pre-mRNA-splicing factor SPF27 (bcas2) of Xenopus tropicalis (Western clawed frog).